A 434-amino-acid chain; its full sequence is Beta-enolase (434 aa).

N-acetylalanine is present on A2. Residue T72 is modified to Phosphothreonine. S83 and S157 each carry phosphoserine. Substrate contacts are provided by H158 and E167. A Phosphoserine modification is found at S176. Phosphothreonine is present on T205. E210 functions as the Proton donor in the catalytic mechanism. Position 229 is a phosphothreonine (T229). Y236 carries the phosphotyrosine modification. Mg(2+) is bound at residue D245. S263 is subject to Phosphoserine. E293 and D318 together coordinate substrate. Mg(2+) is bound by residues E293 and D318. K343 functions as the Proton acceptor in the catalytic mechanism. Substrate-binding positions include 370 to 373 and K394; that span reads SHRS.

The protein belongs to the enolase family. Mammalian enolase is composed of 3 isozyme subunits, alpha, beta and gamma, which can form homodimers or heterodimers which are cell-type and development-specific. Interacts with PNKD. Mg(2+) is required as a cofactor.

The protein resides in the cytoplasm. The enzyme catalyses (2R)-2-phosphoglycerate = phosphoenolpyruvate + H2O. It functions in the pathway carbohydrate degradation; glycolysis; pyruvate from D-glyceraldehyde 3-phosphate: step 4/5. Functionally, glycolytic enzyme that catalyzes the conversion of 2-phosphoglycerate to phosphoenolpyruvate. Appears to have a function in striated muscle development and regeneration. This chain is Beta-enolase (ENO3), found in Bos taurus (Bovine).